The sequence spans 648 residues: UDP-galactose:fucoside alpha-3-galactosyltransferase (648 aa).

WD repeat units follow at residues 320–358 (NHTDIITSINSSDDGKLFTTSIDKSIKIWKFENTSGNDT), 372–420 (HKRG…IQTF), 422–461 (GHTGIINQLIVIPNSSYFFTCSDDNTIRQFDLNNINFKRV), 464–505 (GHNG…NIIK), 507–546 (NQGGWIRKIIYNDNLNQLISGGNDGTIKIWSCDNLNNFND), 556–595 (NENSSINDLQFDSDTNLIYCAFENGSLKSFKLTSNNNNNN), and 617–648 (HLNSSINCIHISKSLNLLFSGGFDKQIKSWDL).

Belongs to the glycosyltransferase 77 family. The cofactor is Mn(2+).

It is found in the cytoplasm. It carries out the reaction an alpha-L-fucosyl-(1-&gt;2)-beta-D-galactosyl derivative + UDP-alpha-D-galactose = an alpha-D-galactosyl-(1-&gt;3)-[alpha-L-fucosyl-(1-&gt;2)]-beta-D-galactosyl derivative + UDP + H(+). It functions in the pathway protein modification; protein glycosylation. Its activity is regulated as follows. Stimulated by dithiothreitol (DTT) in vitro. Totally inhibited by EDTA. Specifically catalyzes the transfer of a galactosyl residue to the hydroxyproline-linked saccharide on Skp1 protein (fpaA/fpaB). Catalyzes the formation of a Gal-alpha-1,3-Fuc linkage, leading to Gal-Fuc-Gal-GlcNAc-HyPro143-Skp1. In Dictyostelium discoideum (Social amoeba), this protein is UDP-galactose:fucoside alpha-3-galactosyltransferase (agtA).